A 601-amino-acid polypeptide reads, in one-letter code: MSTFVISNSMHVGISFSFLHKLPQTPPPQVVCCSGGLRLRPSCSLQLQPPPTTRRSGNYEPSAWDFNYLQSLNNYHHKEERYLRRQADLIEKVKMILKEEKMEALQQLELIDDLRNLGLSYCFDDQINHILTTIYNQHSCFHYHEAATSEEANLYFTALGFRLLREHGFKVSQEVFDRFKNEKGTDFRPDLVDDTQGLLQLYEASFLLREGEDTLEFARQFATKFLQKKVEEKMIEEENLLSWTLHSLELPLHWRIQRLEAKWFLDAYASRPDMNPIIFELAKLEFNIAQALQQEELKDLSRWWNDTGIAEKLPFARDRIVESHYWAIGTLEPYQYRYQRSLIAKIIALTTVVDDVYDVYGTLDELQLFTDAIRRWDIESINQLPSYMQLCYLAIYNFVSELAYDIFRDKGFNSLPYLHKSWLDLVEAYFQEAKWYHSGYTPSLEQYLNIAQISVASPAILSQIYFTMAGSIDKPVIESMYKYRHILNLSGILLRLPDDLGTASDELGRGDLAKAMQCYMKERNVSEEEARDHVRFLNREVSKQMNPARAADDCPFTDDFVVAAANLGRVADFMYVEGDGLGLQYPAIHQHMAELLFHPYA.

A chloroplast-targeting transit peptide spans 1-32; that stretch reads MSTFVISNSMHVGISFSFLHKLPQTPPPQVVC. Residues aspartate 354, aspartate 358, aspartate 498, threonine 502, and glutamate 506 each contribute to the Mg(2+) site. Residues 354 to 358 carry the DDXXD motif motif; the sequence is DDVYD.

Belongs to the terpene synthase family. Tpsd subfamily. Mg(2+) serves as cofactor. Mn(2+) is required as a cofactor.

The protein resides in the plastid. It localises to the chloroplast. It carries out the reaction (2E)-geranyl diphosphate = terpinolene + diphosphate. It functions in the pathway secondary metabolite biosynthesis; terpenoid biosynthesis. Its function is as follows. Monoterpene synthase that catalyzes the formation of terpinolene and other monoterpenes from geranyl diphosphate. The protein is Terpinolene synthase, chloroplastic (TES) of Ocimum basilicum (Sweet basil).